Here is a 113-residue protein sequence, read N- to C-terminus: MSNLENARCEACHADAPQVSDEELKELMREIPDWTPVTNDNVMMLQREFKFKNFKQALAFTNRVGDLAEEEKHHPELVTEWGKVTVTWWTHAINGLHKNDFIMAAKTDSVVDA.

Belongs to the pterin-4-alpha-carbinolamine dehydratase family.

It carries out the reaction (4aS,6R)-4a-hydroxy-L-erythro-5,6,7,8-tetrahydrobiopterin = (6R)-L-erythro-6,7-dihydrobiopterin + H2O. The protein is Putative pterin-4-alpha-carbinolamine dehydratase of Idiomarina loihiensis (strain ATCC BAA-735 / DSM 15497 / L2-TR).